A 1342-amino-acid polypeptide reads, in one-letter code: DNA-directed RNA polymerase subunit beta (1342 aa).

The protein belongs to the RNA polymerase beta chain family. The RNAP catalytic core consists of 2 alpha, 1 beta, 1 beta' and 1 omega subunit. When a sigma factor is associated with the core the holoenzyme is formed, which can initiate transcription.

It catalyses the reaction RNA(n) + a ribonucleoside 5'-triphosphate = RNA(n+1) + diphosphate. Functionally, DNA-dependent RNA polymerase catalyzes the transcription of DNA into RNA using the four ribonucleoside triphosphates as substrates. This is DNA-directed RNA polymerase subunit beta from Tolumonas auensis (strain DSM 9187 / NBRC 110442 / TA 4).